A 290-amino-acid chain; its full sequence is 7-methylguanosine phosphate-specific 5'-nucleotidase B (290 aa).

D39 serves as the catalytic Nucleophile. The Mg(2+) site is built by D39 and D41. The active-site Proton donor is the D41. A CMP-binding site is contributed by E86. N(7)-methyl-GMP is bound at residue E86. Residues 154–155 (SA) and K203 each bind substrate. D228 is a Mg(2+) binding site.

It belongs to the pyrimidine 5'-nucleotidase family. Monomer.

It is found in the cytoplasm. It catalyses the reaction N(7)-methyl-GMP + H2O = N(7)-methylguanosine + phosphate. It carries out the reaction CMP + H2O = cytidine + phosphate. The catalysed reaction is a ribonucleoside 5'-phosphate + H2O = a ribonucleoside + phosphate. Functionally, specifically hydrolyzes 7-methylguanosine monophosphate (m(7)GMP) to 7-methylguanosine and inorganic phosphate. The specific activity for m(7)GMP may protect cells against undesired salvage of m(7)GMP and its incorporation into nucleic acids. Also has weak activity for CMP. UMP and purine nucleotides are poor substrates. This is 7-methylguanosine phosphate-specific 5'-nucleotidase B (Nt5c3b-b) from Xenopus laevis (African clawed frog).